The sequence spans 133 residues: NLP effector protein 14 (133 aa).

A Conserved undecapeptide motifI I motif is present at residues 1–9 (MYSWYFPKD). Positions 16 to 22 (GHRHDWE) match the Hepta-peptide GHRHDWE motif II motif.

The protein belongs to the Necrosis inducing protein (NPP1) family.

It is found in the secreted. In terms of biological role, secreted effector that contributes strongly to virulence during infection by P.capsici. Causes large necrotic areas in both host C.annuum and non-host N.benthamiana. The polypeptide is NLP effector protein 14 (Phytophthora capsici).